The following is a 472-amino-acid chain: Cysteine--tRNA ligase (472 aa).

Position 29 (Cys-29) interacts with Zn(2+). Residues 31–41 (ITVYDYCHLGH) carry the 'HIGH' region motif. 3 residues coordinate Zn(2+): Cys-214, His-239, and Glu-243. The 'KMSKS' region motif lies at 271-275 (KMSKS). Lys-274 is an ATP binding site.

Belongs to the class-I aminoacyl-tRNA synthetase family. In terms of assembly, monomer. It depends on Zn(2+) as a cofactor.

The protein localises to the cytoplasm. It carries out the reaction tRNA(Cys) + L-cysteine + ATP = L-cysteinyl-tRNA(Cys) + AMP + diphosphate. The polypeptide is Cysteine--tRNA ligase (Picosynechococcus sp. (strain ATCC 27264 / PCC 7002 / PR-6) (Agmenellum quadruplicatum)).